We begin with the raw amino-acid sequence, 438 residues long: Transposon Ty2-GR1 Gag polyprotein (438 aa).

3 stretches are compositionally biased toward polar residues: residues 1 to 11, 19 to 39, and 49 to 60; these read MESQQLHQNPH, ASVTSKEVPSNQDPLAVSASN, and KVNSQQETTPGT. Disordered regions lie at residues 1–86, 360–403, and 418–438; these read MESQ…GQYQ, HSEY…ATSS, and VSSQYLSDDDELSLRPATERI. Positions 295-397 are RNA-binding; it reads ENNINVSDRL…SSKPRAAKAH (103 aa). A compositionally biased stretch (low complexity) spans 369–381; that stretch reads TSPNTTNTKVTTR.

In terms of assembly, homotrimer.

It localises to the cytoplasm. In terms of biological role, capsid protein (CA) is the structural component of the virus-like particle (VLP), forming the shell that encapsulates the retrotransposons dimeric RNA genome. The particles are assembled from trimer-clustered units and there are holes in the capsid shells that allow for the diffusion of macromolecules. CA also has nucleocapsid-like chaperone activity, promoting primer tRNA(i)-Met annealing to the multipartite primer-binding site (PBS), dimerization of Ty2 RNA and initiation of reverse transcription. This Saccharomyces cerevisiae (strain ATCC 204508 / S288c) (Baker's yeast) protein is Transposon Ty2-GR1 Gag polyprotein (TY2A-GR1).